The following is a 357-amino-acid chain: UDP-xylose transporter 3 (357 aa).

Helical transmembrane passes span 7–27, 31–51, 75–95, 100–120, 132–152, 154–174, 194–214, 224–244, 250–270, and 280–300; these read FQLGTIGALSLSVVSSVSIVI, ALISTLGFTFATTLTSWHLLV, VMGFGILNGISIGLLNLSLGF, FYQMTKLAIIPCTVLLETLFF, LTILLLGVGIATVTDLQLNML, SVLSLLAVVTTCVAQIMTNTI, AITLFVTGPFLDGLLTNQNVF, FFIVLSCLISVSVNFSTFLVI, VTYQVLGHLKTCLVLAFGYVL, and ILGILVAVIGMVVYSYYCSIE. The residue at position 334 (Ser-334) is a Phosphoserine.

This sequence belongs to the TPT transporter family. TPT (TC 2.A.7.9) subfamily. As to expression, ubiquitous.

The protein localises to the golgi apparatus membrane. Functionally, nucleotide-sugar transporter that transports UDP-xylose and UMP in a strict counter-exchange mode. This is UDP-xylose transporter 3 from Arabidopsis thaliana (Mouse-ear cress).